The following is a 1075-amino-acid chain: DNA-directed RNA polymerase subunit beta (1075 aa).

The protein belongs to the RNA polymerase beta chain family. In plastids the minimal PEP RNA polymerase catalytic core is composed of four subunits: alpha, beta, beta', and beta''. When a (nuclear-encoded) sigma factor is associated with the core the holoenzyme is formed, which can initiate transcription.

It localises to the plastid. It is found in the chloroplast. The catalysed reaction is RNA(n) + a ribonucleoside 5'-triphosphate = RNA(n+1) + diphosphate. In terms of biological role, DNA-dependent RNA polymerase catalyzes the transcription of DNA into RNA using the four ribonucleoside triphosphates as substrates. The chain is DNA-directed RNA polymerase subunit beta from Sorghum bicolor (Sorghum).